We begin with the raw amino-acid sequence, 177 residues long: Ribosome maturation factor RimP (177 aa).

Residues 153 to 171 are compositionally biased toward basic and acidic residues; sequence VEFNRKDTKNDNQTEHDNK. The segment at 153 to 177 is disordered; it reads VEFNRKDTKNDNQTEHDNKTEEEEA.

Belongs to the RimP family.

Its subcellular location is the cytoplasm. Functionally, required for maturation of 30S ribosomal subunits. The protein is Ribosome maturation factor RimP of Streptomyces coelicolor (strain ATCC BAA-471 / A3(2) / M145).